A 283-amino-acid chain; its full sequence is Elongation factor Ts (283 aa).

Residues Thr80–Val83 form an involved in Mg(2+) ion dislocation from EF-Tu region.

Belongs to the EF-Ts family.

It is found in the cytoplasm. Its function is as follows. Associates with the EF-Tu.GDP complex and induces the exchange of GDP to GTP. It remains bound to the aminoacyl-tRNA.EF-Tu.GTP complex up to the GTP hydrolysis stage on the ribosome. This is Elongation factor Ts from Actinobacillus pleuropneumoniae serotype 5b (strain L20).